The chain runs to 314 residues: Methionyl-tRNA formyltransferase (314 aa).

Residue 112 to 115 participates in (6S)-5,6,7,8-tetrahydrofolate binding; that stretch reads SLLP.

It belongs to the Fmt family.

The catalysed reaction is L-methionyl-tRNA(fMet) + (6R)-10-formyltetrahydrofolate = N-formyl-L-methionyl-tRNA(fMet) + (6S)-5,6,7,8-tetrahydrofolate + H(+). Attaches a formyl group to the free amino group of methionyl-tRNA(fMet). The formyl group appears to play a dual role in the initiator identity of N-formylmethionyl-tRNA by promoting its recognition by IF2 and preventing the misappropriation of this tRNA by the elongation apparatus. The protein is Methionyl-tRNA formyltransferase of Tolumonas auensis (strain DSM 9187 / NBRC 110442 / TA 4).